Reading from the N-terminus, the 750-residue chain is Polyribonucleotide nucleotidyltransferase (750 aa).

Mg(2+) contacts are provided by Asp-492 and Asp-498. The KH domain maps to 559–618 (PQLSVVEVNPEIIRVIIGPGGKNIKAITSATGASIDIEDSGRISIFAPTKESMDMAREMV). The S1 motif domain maps to 628 to 695 (GKNYTAKVRK…NDGRVRASRK (68 aa)). Residues 705–750 (EWDPADTARPPRKPRDRDDRGDRGGRGDRGDRGGRNGRGGDRRDRR) form a disordered region. The span at 717 to 750 (KPRDRDDRGDRGGRGDRGDRGGRNGRGGDRRDRR) shows a compositional bias: basic and acidic residues.

Belongs to the polyribonucleotide nucleotidyltransferase family. The cofactor is Mg(2+).

It is found in the cytoplasm. It catalyses the reaction RNA(n+1) + phosphate = RNA(n) + a ribonucleoside 5'-diphosphate. Its function is as follows. Involved in mRNA degradation. Catalyzes the phosphorolysis of single-stranded polyribonucleotides processively in the 3'- to 5'-direction. In Oleidesulfovibrio alaskensis (strain ATCC BAA-1058 / DSM 17464 / G20) (Desulfovibrio alaskensis), this protein is Polyribonucleotide nucleotidyltransferase.